Consider the following 146-residue polypeptide: Probable U6 snRNA-associated Sm-like protein LSm4 (146 aa).

The region spanning 2-75 (LPLSLLKTAQ…IKYLRVPDEV (74 aa)) is the Sm domain. The span at 80–91 (QEEAKSRTDRKP) shows a compositional bias: basic and acidic residues. Positions 80 to 146 (QEEAKSRTDR…GGRGGGRGRG (67 aa)) are disordered. The segment covering 137–146 (GGRGGGRGRG) has biased composition (gly residues).

It belongs to the snRNP Sm proteins family. As to quaternary structure, LSm subunits form a heteromer with a doughnut shape.

The protein localises to the nucleus. Functionally, binds specifically to the 3'-terminal U-tract of U6 snRNA. The protein is Probable U6 snRNA-associated Sm-like protein LSm4 of Nicotiana tabacum (Common tobacco).